A 233-amino-acid chain; its full sequence is uncharacterized protein (233 aa).

Disordered stretches follow at residues 1-159 and 181-206; these read MGKH…NEKL and MGVK…QDKM. Residues 36-115 show a composition bias toward basic and acidic residues; sequence RDRSRSPHKE…RRDDKNRLSA (80 aa). The span at 135–148 shows a compositional bias: low complexity; that stretch reads SSSSNTTDTASSSS. A compositionally biased stretch (basic and acidic residues) spans 189–206; sequence PTDDSSRLSDEKNRQDKM.

This is an uncharacterized protein from Caenorhabditis elegans.